We begin with the raw amino-acid sequence, 213 residues long: Protein Pars_0011 (213 aa).

Positions 8 to 201 (EEGRYLVKLA…EREPNEEVYQ (194 aa)) constitute an AMMECR1 domain.

This is Protein Pars_0011 from Pyrobaculum arsenaticum (strain DSM 13514 / JCM 11321 / PZ6).